We begin with the raw amino-acid sequence, 407 residues long: Multifunctional CCA protein (407 aa).

ATP contacts are provided by Gly8 and Arg11. Gly8 and Arg11 together coordinate CTP. Mg(2+) is bound by residues Asp21 and Asp23. Arg91, Arg137, and Arg140 together coordinate ATP. Positions 91, 137, and 140 each coordinate CTP. The 102-residue stretch at 228 to 329 (TGIHTLLVAE…VKIFNKLDVW (102 aa)) folds into the HD domain.

Belongs to the tRNA nucleotidyltransferase/poly(A) polymerase family. Bacterial CCA-adding enzyme type 1 subfamily. In terms of assembly, monomer. Can also form homodimers and oligomers. Requires Mg(2+) as cofactor. The cofactor is Ni(2+).

It catalyses the reaction a tRNA precursor + 2 CTP + ATP = a tRNA with a 3' CCA end + 3 diphosphate. It carries out the reaction a tRNA with a 3' CCA end + 2 CTP + ATP = a tRNA with a 3' CCACCA end + 3 diphosphate. Functionally, catalyzes the addition and repair of the essential 3'-terminal CCA sequence in tRNAs without using a nucleic acid template. Adds these three nucleotides in the order of C, C, and A to the tRNA nucleotide-73, using CTP and ATP as substrates and producing inorganic pyrophosphate. tRNA 3'-terminal CCA addition is required both for tRNA processing and repair. Also involved in tRNA surveillance by mediating tandem CCA addition to generate a CCACCA at the 3' terminus of unstable tRNAs. While stable tRNAs receive only 3'-terminal CCA, unstable tRNAs are marked with CCACCA and rapidly degraded. This Vibrio vulnificus (strain YJ016) protein is Multifunctional CCA protein.